We begin with the raw amino-acid sequence, 151 residues long: Transcriptional regulator MraZ (151 aa).

SpoVT-AbrB domains are found at residues 7-53 and 82-125; these read EYDC…SQTE and INEV…SPDL.

It belongs to the MraZ family. Forms oligomers.

It localises to the cytoplasm. Its subcellular location is the nucleoid. In Cytophaga hutchinsonii (strain ATCC 33406 / DSM 1761 / CIP 103989 / NBRC 15051 / NCIMB 9469 / D465), this protein is Transcriptional regulator MraZ.